The following is a 204-amino-acid chain: ADP-ribosylation factor-like protein 15 (204 aa).

GTP-binding positions include 39 to 46, 82 to 86, and 142 to 145; these read GLTGSGKT, ELGGA, and NHQD.

Belongs to the small GTPase superfamily. Arf family.

This chain is ADP-ribosylation factor-like protein 15 (Arl15), found in Mus musculus (Mouse).